The chain runs to 85 residues: uncharacterized protein (85 aa).

Belongs to the ycf76 family.

Its subcellular location is the plastid. It localises to the chloroplast. This is an uncharacterized protein from Zea mays (Maize).